The primary structure comprises 63 residues: DNA-directed RNA polymerase 7 kDa subunit (63 aa).

It belongs to the poxviridae DNA-directed RNA polymerase 7 kDa subunit family. The DNA-dependent RNA polymerase used for intermediate and late genes expression consists of eight subunits 147 kDa, 133 kDa, 35 kDa, 30 kDa, 22 kDa, 19 kDa, 18 kDa and 7 kDa totalling more than 500 kDa in mass. The same holoenzyme, with the addition of the transcription-specificity factor RAP94, is used for early gene expression.

It localises to the virion. The catalysed reaction is RNA(n) + a ribonucleoside 5'-triphosphate = RNA(n+1) + diphosphate. Its function is as follows. Part of the DNA-dependent RNA polymerase which catalyzes the transcription of viral DNA into RNA using the four ribonucleoside triphosphates as substrates. Responsible for the transcription of early, intermediate and late genes. DNA-dependent RNA polymerase associates with the early transcription factor (ETF) thereby allowing the early genes transcription. Late transcription, and probably also intermediate transcription, require newly synthesized RNA polymerase. This Myxoma virus (strain Lausanne) (MYXV) protein is DNA-directed RNA polymerase 7 kDa subunit (RPO7).